We begin with the raw amino-acid sequence, 600 residues long: Elongation factor 4 (600 aa).

The tr-type G domain maps to 5–187 (SNIRNFSIIA…ALVERIPAPT (183 aa)). Residues 17-22 (DHGKST) and 134-137 (NKID) each bind GTP.

Belongs to the TRAFAC class translation factor GTPase superfamily. Classic translation factor GTPase family. LepA subfamily.

It localises to the cell inner membrane. It carries out the reaction GTP + H2O = GDP + phosphate + H(+). Functionally, required for accurate and efficient protein synthesis under certain stress conditions. May act as a fidelity factor of the translation reaction, by catalyzing a one-codon backward translocation of tRNAs on improperly translocated ribosomes. Back-translocation proceeds from a post-translocation (POST) complex to a pre-translocation (PRE) complex, thus giving elongation factor G a second chance to translocate the tRNAs correctly. Binds to ribosomes in a GTP-dependent manner. The protein is Elongation factor 4 of Psychrobacter sp. (strain PRwf-1).